We begin with the raw amino-acid sequence, 66 residues long: Large ribosomal subunit protein uL29 (66 aa).

Belongs to the universal ribosomal protein uL29 family.

In Helicobacter pylori (strain HPAG1), this protein is Large ribosomal subunit protein uL29.